Here is a 185-residue protein sequence, read N- to C-terminus: V-type ATP synthase subunit E (185 aa).

It belongs to the V-ATPase E subunit family.

In terms of biological role, produces ATP from ADP in the presence of a proton gradient across the membrane. The protein is V-type ATP synthase subunit E of Deinococcus geothermalis (strain DSM 11300 / CIP 105573 / AG-3a).